The chain runs to 93 residues: M-zodatoxin-Lt5a (93 aa).

The signal sequence occupies residues 1-22 (MKYCVVILALLVALVCITESRS). Positions 23–64 (TETGYAVAETLEDNDLDELQAYLEEIAEASEMEDFSNIEEAR) are excised as a propeptide. Residues 61 to 64 (EEAR) carry the Processing quadruplet motif motif. Residue L92 is modified to Leucine amide.

In terms of processing, cleavage of the propeptide depends on the processing quadruplet motif (XXXR, with at least one of X being E). As to expression, expressed by the venom gland.

It is found in the secreted. Has antimicrobial activity against. Gram-positive bacteria (A.globiformis VKM Ac-1112 (MIC=1.1 uM), and B.subtilis VKM B-501 (MIC=0.6 uM)), Gram-negative bacteria (E.coli DH5-alpha (MIC=0.6 uM), E.coli MH1 (MIC=0.6 uM), and P.aeruginosa PAO1 (MIC=18 uM)), and yeasts (P.pastoris GS115 (MIC&gt;37 uM), and S.cerevisiae Y190 (MIC&gt;37 uM)). Also has a moderate hemolytic activity against rabbit erythrocytes. Causes paralysis, but is not lethal when injected into insect (M.domestica) larvae. The sequence is that of M-zodatoxin-Lt5a from Lachesana tarabaevi (Spider).